We begin with the raw amino-acid sequence, 305 residues long: Protoheme IX farnesyltransferase (305 aa).

9 helical membrane passes run 28–48 (VVLLMLLTAIVGMCLASPGIV), 52–72 (VFLFGNLGIALAASSAAAINH), 102–122 (IFAAILCILSMIILIAFVNLL), 123–143 (TALLTFITLIGYAGFYTLYLK), 150–170 (IVIGGLAGAAPPLLGWVAVTG), 176–196 (ALILLLIIFLWTPPHFWALAI), 221–241 (INILLYTLLLTAISFLPFVIM), 243–263 (SGWIYFSSVCLLNLGFLYWAI), and 282–302 (IWYLMLLFTALLVDHYVYLAL).

The protein belongs to the UbiA prenyltransferase family. Protoheme IX farnesyltransferase subfamily.

The protein localises to the cell inner membrane. It catalyses the reaction heme b + (2E,6E)-farnesyl diphosphate + H2O = Fe(II)-heme o + diphosphate. It participates in porphyrin-containing compound metabolism; heme O biosynthesis; heme O from protoheme: step 1/1. Functionally, converts heme B (protoheme IX) to heme O by substitution of the vinyl group on carbon 2 of heme B porphyrin ring with a hydroxyethyl farnesyl side group. The polypeptide is Protoheme IX farnesyltransferase (Coxiella burnetii (strain CbuK_Q154) (Coxiella burnetii (strain Q154))).